Here is a 64-residue protein sequence, read N- to C-terminus: Defensin beta 4A (64 aa).

Residues 1–23 form the signal peptide; sequence MRVLYLLFSFLFIFLMPLPGVFG. 3 disulfides stabilise this stretch: Cys31-Cys60, Cys38-Cys53, and Cys43-Cys61. Residues 33 to 48 form a phosphatidylinositol 4,5-bisphosphate (PIP2) binding region; it reads KSGAICHPVFCPRRYK.

Belongs to the beta-defensin family. LAP/TAP subfamily. As to quaternary structure, monomer. Homodimer. In terms of tissue distribution, expressed in lung epithelial cells (at protein level). Expressed in foreskin, lung and trachea. Lower expression in kidney, uterus and salivary gland tissue. Expressed in epithelial cells of the respiratory tract, with higher expression in distal parenchyma of the lung, trachea, and tonsils, and lower expression in pharynx and adenoid, and low expression in tongue and larynx.

The protein localises to the secreted. Functionally, exhibits antimicrobial activity against Gram-negative bacteria and Gram-positive bacteria, with highest activity against Gram-negative bacteria. Antimicrobial activity against P.aruginosa seems to be salt-sensitive and is reduced with high salt concentrations greater than 25 mM. Also exhibits antimicrobial activity against the yeast C.albicans. Permeabilizes C.albicans cell membranes via targeting plasma membrane lipid phosphatidylinositol 4,5-bisphosphate (PIP2), thereby leading to cell fragmentation and cell death. Acts as a ligand for C-C chemokine receptor CCR6. Binds to CCR6 and induces chemotactic activity of CCR6-expressing cells, such as immature dendritic cells and memory T cells. This Homo sapiens (Human) protein is Defensin beta 4A (DEFB4A).